A 30-amino-acid chain; its full sequence is Cysteine-rich venom protein hematin (30 aa).

It belongs to the CRISP family. Post-translationally, contains 8 disulfide bonds. As to expression, expressed by the venom gland.

Its subcellular location is the secreted. In terms of biological role, inhibits calcium-activated potassium channels (KCa), voltage-gated potassium channel (Kv), and the calcium release channel/ryanodine receptor (RyR). The protein is Cysteine-rich venom protein hematin of Hemachatus haemachatus (Rinkhals).